The sequence spans 241 residues: Methylthioribulose-1-phosphate dehydratase (241 aa).

Cys100 serves as a coordination point for substrate. Residues His117 and His119 each coordinate Zn(2+). Glu146 serves as the catalytic Proton donor/acceptor. His202 is a Zn(2+) binding site.

Belongs to the aldolase class II family. MtnB subfamily. Zn(2+) is required as a cofactor.

Its subcellular location is the cytoplasm. It carries out the reaction 5-(methylsulfanyl)-D-ribulose 1-phosphate = 5-methylsulfanyl-2,3-dioxopentyl phosphate + H2O. The protein operates within amino-acid biosynthesis; L-methionine biosynthesis via salvage pathway; L-methionine from S-methyl-5-thio-alpha-D-ribose 1-phosphate: step 2/6. Functionally, catalyzes the dehydration of methylthioribulose-1-phosphate (MTRu-1-P) into 2,3-diketo-5-methylthiopentyl-1-phosphate (DK-MTP-1-P). The chain is Methylthioribulose-1-phosphate dehydratase from Ajellomyces dermatitidis (strain ER-3 / ATCC MYA-2586) (Blastomyces dermatitidis).